The following is a 117-amino-acid chain: Multidrug resistance protein EbrB (117 aa).

4 helical membrane-spanning segments follow: residues 3–23 (GLLY…MLKL), 31–51 (WPIG…SFSL), 59–79 (AYAT…FLLF), and 81–101 (ETIS…VVVL).

It belongs to the drug/metabolite transporter (DMT) superfamily. Small multidrug resistance (SMR) (TC 2.A.7.1) family. EbrA/EbrB subfamily. The efflux pump is composed of EbrA and EbrB.

The protein resides in the cell membrane. Functionally, part of a multidrug efflux pump. Confers resistance to cationic lipophilic dyes such as ethidium bromide, acriflavine, pyronine Y and safranin O. The efflux is probably coupled to an influx of protons. In Bacillus atrophaeus, this protein is Multidrug resistance protein EbrB (ebrB).